We begin with the raw amino-acid sequence, 491 residues long: Glutamine synthetase (491 aa).

Residues 23 to 111 (NNVRQVLCAF…MFGNVYEAWG (89 aa)) form the GS beta-grasp domain. One can recognise a GS catalytic domain in the interval 119 to 491 (PRGYVAKRYE…PWEFMKYFDI (373 aa)). E143 and E145 together coordinate Mg(2+). Residue E225 coordinates ATP. Residues E230 and E238 each contribute to the Mg(2+) site. Residues 282 to 283 (NA) and A283 contribute to the L-glutamate site. Residue H287 coordinates Mg(2+). ATP-binding positions include 289–291 (HQS) and S291. R344, E350, and R362 together coordinate L-glutamate. R362 and R367 together coordinate ATP. E381 serves as a coordination point for Mg(2+). An L-glutamate-binding site is contributed by R383.

Belongs to the glutamine synthetase family. Oligomer of 12 subunits arranged in the form of two hexagons. It depends on Mg(2+) as a cofactor.

The protein resides in the cytoplasm. It carries out the reaction L-glutamate + NH4(+) + ATP = L-glutamine + ADP + phosphate + H(+). In terms of biological role, probably involved in nitrogen metabolism via ammonium assimilation. Catalyzes the ATP-dependent biosynthesis of glutamine from glutamate and ammonia. Beta-glutamate is a much poorer substrate than alpha-glutamate. The polypeptide is Glutamine synthetase (Archaeoglobus fulgidus (strain ATCC 49558 / DSM 4304 / JCM 9628 / NBRC 100126 / VC-16)).